Here is a 298-residue protein sequence, read N- to C-terminus: MSVHVLSVEVSVIKQFYALTKPRVIQLIVFCALIGMVLAVPGLPTWAELQLALLACLGIWLVAGAAAAFNCVVEKSIDAKMKRTAWRPTARGELADWQTLLFSAVLCAAGSILLYFWVNPLTMWLTFATFIGYAVVYTVILKPLTPQNIVIGGASGAMPPVLGWAAMAGDVGPEALILFLIIFLWTPPHFWALALYRVEDYRKSGLPMLPVTHGNEFTRLMVLLYTFILFAACLMPYVYGMSSWLYLIAAVVLNLGFCLYAFYLWRDYSDLLARKTFRFSLIHLSLLFAALLLDHYLL.

The next 9 membrane-spanning stretches (helical) occupy residues 24 to 44, 49 to 69, 100 to 120, 121 to 141, 149 to 169, 175 to 195, 220 to 240, 244 to 264, and 277 to 297; these read VIQL…PGLP, LQLA…AAAF, LLFS…WVNP, LTMW…TVIL, IVIG…AMAG, ALIL…ALAL, LMVL…YVYG, WLYL…AFYL, and FRFS…DHYL.

This sequence belongs to the UbiA prenyltransferase family. Protoheme IX farnesyltransferase subfamily.

It is found in the cell inner membrane. It catalyses the reaction heme b + (2E,6E)-farnesyl diphosphate + H2O = Fe(II)-heme o + diphosphate. The protein operates within porphyrin-containing compound metabolism; heme O biosynthesis; heme O from protoheme: step 1/1. Functionally, converts heme B (protoheme IX) to heme O by substitution of the vinyl group on carbon 2 of heme B porphyrin ring with a hydroxyethyl farnesyl side group. The chain is Protoheme IX farnesyltransferase from Albidiferax ferrireducens (strain ATCC BAA-621 / DSM 15236 / T118) (Rhodoferax ferrireducens).